The sequence spans 727 residues: MSRVVAADDNMALPFFSPEFGNVSGASSSPTTFAQLLQNVDDSTRRSHHQHHVDVDLASPDQSVPFVLSFTDLTYSVKVRRKFTWRRSVSSDPGAPSEGIFSSKTKTLLNGITGEARDGEILAVLGASGSGKSTLIDALANRIAKGSLKGNVTLNGEVLNSKMQKAISAYVMQDDLLFPMLTVEETLMFAAEFRLPRSLSKSKKSLRVQALIDQLGLRNAANTVIGDEGHRGISGGERRRVSIGIDIIHDPILLFLDEPTSGLDSTSALSVIKVLKRIAQSGSMVIMTLHQPSYRLLRLLDRLLFLSRGQTVFSGSPAMLPRFFAEFGHPIPEHENRTEFALDLIRELEGSAGGTRSLVEFNKGFRQRKAEPRSQTGLSLKEAISASISKGKLVSGATTTTHSSGSSPVSTIPTFANPFWVELAVLAKRSMTNSRRQPELFGIRLGAVLVTGFILATMFWQLDNSPKGVQERLGCFAFAMSTTFYTCADALPVFLQERFIFMRETAYNAYRRSSYVLSHSLVALPSLIILSLAFAAITFWGVGLDGGLMGFLFYFLVILASFWAGSSFVTFLSGVVPHVMLGYTIVVAILAYFLLFSGFFINRDRIPGYWIWFHYISLVKYPYEAVLLNEFGDPTKCFVRGVQIFDNTPLVAVPQGMKVRLLATMSKSLGMRITSSTCLTTGYDILQQQGVTDLTKWNCLWVTVAWGFFFRILFYFSLLLGSKNKRR.

Residues leucine 68–glutamate 333 form the ABC transporter domain. Glycine 126–serine 133 is a binding site for ATP. The region spanning valine 421–phenylalanine 631 is the ABC transmembrane type-2 domain. Helical transmembrane passes span leucine 440 to tryptophan 460, cysteine 475 to leucine 495, leucine 517 to isoleucine 537, alanine 560 to methionine 580, leucine 581 to isoleucine 601, and leucine 700 to leucine 720.

This sequence belongs to the ABC transporter superfamily. ABCG family. Eye pigment precursor importer (TC 3.A.1.204) subfamily.

It is found in the membrane. The polypeptide is ABC transporter G family member 6 (ABCG6) (Arabidopsis thaliana (Mouse-ear cress)).